The chain runs to 296 residues: 4-hydroxybenzoate octaprenyltransferase (296 aa).

A run of 8 helical transmembrane segments spans residues 28–48, 52–72, 102–122, 146–166, 169–189, 219–239, 241–261, and 275–295; these read PIGI…AGKG, LANI…GCVI, ALVF…CTNA, YYPQ…AFTA, GELP…TVGY, VIIL…GSKF, LGMW…WEFW, and FLHN…DYAL.

Belongs to the UbiA prenyltransferase family. It depends on Mg(2+) as a cofactor.

The protein resides in the cell inner membrane. The enzyme catalyses all-trans-octaprenyl diphosphate + 4-hydroxybenzoate = 4-hydroxy-3-(all-trans-octaprenyl)benzoate + diphosphate. It functions in the pathway cofactor biosynthesis; ubiquinone biosynthesis. In terms of biological role, catalyzes the prenylation of para-hydroxybenzoate (PHB) with an all-trans polyprenyl group. Mediates the second step in the final reaction sequence of ubiquinone-8 (UQ-8) biosynthesis, which is the condensation of the polyisoprenoid side chain with PHB, generating the first membrane-bound Q intermediate 3-octaprenyl-4-hydroxybenzoate. The chain is 4-hydroxybenzoate octaprenyltransferase from Pseudomonas fluorescens (strain Pf0-1).